The primary structure comprises 394 residues: Phosphoglycerate kinase (394 aa).

Residues 21–23 (DFN), Arg-37, 60–63 (HLGR), Arg-119, and Arg-152 each bind substrate. Residues Lys-202, Gly-293, Glu-324, and 350-353 (GGDS) each bind ATP.

This sequence belongs to the phosphoglycerate kinase family. Monomer.

It localises to the cytoplasm. It carries out the reaction (2R)-3-phosphoglycerate + ATP = (2R)-3-phospho-glyceroyl phosphate + ADP. Its pathway is carbohydrate degradation; glycolysis; pyruvate from D-glyceraldehyde 3-phosphate: step 2/5. This Caldanaerobacter subterraneus subsp. tengcongensis (strain DSM 15242 / JCM 11007 / NBRC 100824 / MB4) (Thermoanaerobacter tengcongensis) protein is Phosphoglycerate kinase.